The following is a 76-amino-acid chain: Omega-conotoxin-like TxO2 (76 aa).

An N-terminal signal peptide occupies residues 1 to 22 (MKLTCVVIVAVLFLTAWTFVTA). A propeptide spanning residues 23 to 52 (APHSSNALENLYLKAHHEMNNPEDSELNKR) is cleaved from the precursor. Cystine bridges form between Cys-53–Cys-67, Cys-60–Cys-71, and Cys-66–Cys-75.

It belongs to the conotoxin O1 superfamily. Expressed by the venom duct.

Its subcellular location is the secreted. Functionally, omega-conotoxins act at presynaptic membranes, they bind and block voltage-gated calcium channels (Cav). The sequence is that of Omega-conotoxin-like TxO2 from Conus textile (Cloth-of-gold cone).